The primary structure comprises 439 residues: Acyl-coenzyme A thioesterase 9, mitochondrial (439 aa).

The transit peptide at 1-21 (MKRAAIRLWTLNKGLLTHGRG) directs the protein to the mitochondrion. 2 HotDog ACOT-type domains span residues 85–209 (SYIE…RDSE) and 289–401 (EDTK…EKEV). N6-acetyllysine is present on Lys-102.

Belongs to the acyl coenzyme A hydrolase family. In terms of assembly, interacts with NYAP1, NYAP2 and MYO16. In terms of tissue distribution, widely expressed.

It is found in the mitochondrion. The protein localises to the mitochondrion matrix. It localises to the mitochondrion inner membrane. The catalysed reaction is butanoyl-CoA + H2O = butanoate + CoA + H(+). It catalyses the reaction propanoyl-CoA + H2O = propanoate + CoA + H(+). The enzyme catalyses hexadecanoyl-CoA + H2O = hexadecanoate + CoA + H(+). It carries out the reaction octanoyl-CoA + H2O = octanoate + CoA + H(+). The catalysed reaction is decanoyl-CoA + H2O = decanoate + CoA + H(+). It catalyses the reaction tetradecanoyl-CoA + H2O = tetradecanoate + CoA + H(+). The enzyme catalyses 4,8-dimethylnonanoyl-CoA + H2O = 4,8-dimethylnonanoate + CoA + H(+). It carries out the reaction 3-methylbutanoyl-CoA + H2O = 3-methylbutanoate + CoA + H(+). The catalysed reaction is 2-methylpropanoyl-CoA + H2O = 2-methylpropanoate + CoA + H(+). It participates in lipid metabolism; fatty acid metabolism. Strongly inhibited by NADH and CoA. In terms of biological role, mitochondrial acyl-CoA thioesterase. Catalyzes the hydrolysis of acyl-CoAs into free fatty acids and coenzyme A (CoA), regulating their respective intracellular levels. Shows a clear preference for hydrophobic short-, medium-, and long-chain saturated acyl-CoAs with some activity also with short-chain dicarboxylic CoA esters. Regulates both mitochondrial lipid and amino acid metabolism. The sequence is that of Acyl-coenzyme A thioesterase 9, mitochondrial (Acot9) from Mus musculus (Mouse).